A 167-amino-acid polypeptide reads, in one-letter code: Small heat shock protein C1 (167 aa).

The 109-residue stretch at 59–167 folds into the sHSP domain; the sequence is PLYESNSIKS…EQDAREITIN (109 aa).

The protein belongs to the small heat shock protein (HSP20) family.

The protein is Small heat shock protein C1 (hspC1) of Rickettsia felis (strain ATCC VR-1525 / URRWXCal2) (Rickettsia azadi).